We begin with the raw amino-acid sequence, 464 residues long: Cell division protein FtsA (464 aa).

The segment at 392–464 (EVIESDKDSE…FKKLMKSLFE (73 aa)) is disordered. Positions 416–455 (KKENDEVAPEAPREESYEDRENHLEDEQQTEGKAKEESKF) are enriched in basic and acidic residues.

It belongs to the FtsA/MreB family. In terms of assembly, self-interacts. Interacts with FtsZ.

The protein resides in the cell membrane. In terms of biological role, cell division protein that is involved in the assembly of the Z ring. May serve as a membrane anchor for the Z ring. The sequence is that of Cell division protein FtsA from Staphylococcus epidermidis (strain ATCC 35984 / DSM 28319 / BCRC 17069 / CCUG 31568 / BM 3577 / RP62A).